The chain runs to 501 residues: Glycerol kinase (501 aa).

Position 11 (Thr-11) interacts with ADP. Residues Thr-11, Thr-12, and Ser-13 each coordinate ATP. Position 11 (Thr-11) interacts with sn-glycerol 3-phosphate. ADP is bound at residue Arg-15. Positions 81, 82, 133, and 242 each coordinate sn-glycerol 3-phosphate. Residues Arg-81, Glu-82, Tyr-133, Asp-242, and Gln-243 each coordinate glycerol. Residues Thr-264 and Gly-307 each contribute to the ADP site. 4 residues coordinate ATP: Thr-264, Gly-307, Gln-311, and Gly-409. Positions 409 and 413 each coordinate ADP.

This sequence belongs to the FGGY kinase family.

It carries out the reaction glycerol + ATP = sn-glycerol 3-phosphate + ADP + H(+). It functions in the pathway polyol metabolism; glycerol degradation via glycerol kinase pathway; sn-glycerol 3-phosphate from glycerol: step 1/1. Its activity is regulated as follows. Inhibited by fructose 1,6-bisphosphate (FBP). Its function is as follows. Key enzyme in the regulation of glycerol uptake and metabolism. Catalyzes the phosphorylation of glycerol to yield sn-glycerol 3-phosphate. This Borreliella afzelii (strain PKo) (Borrelia afzelii) protein is Glycerol kinase.